Here is a 46-residue protein sequence, read N- to C-terminus: Defensin Tk-AMP-D6.1 (46 aa).

4 disulfides stabilise this stretch: Cys3–Cys46, Cys14–Cys34, Cys20–Cys40, and Cys24–Cys42.

Functionally, plant defense peptide. This Triticum kiharae (Wheat) protein is Defensin Tk-AMP-D6.1.